The chain runs to 68 residues: uncharacterized protein (68 aa).

This is an uncharacterized protein from Rickettsia prowazekii (strain Madrid E).